The chain runs to 335 residues: MNKNIPAFHRRCHGLVQGLARTLLLAPVLLALSVPAAQAQTWPSRPIRMVVAAGAGSSVDVFARLVSERLSKALGQAVIVDPRPGANGTIAAQAVASAKPDGYTLLYAGNSALVVAPLMTKDLPYDAEKDLEPVAPVVYVPLAIAVGAKSAIQNIQELVAGAKTDEVFFATPGAASLSRLIGESINQKAGTRLVNIAYPSSPPAHTDIIGGQVPILIDGLGGIAPHAKSGRMRLLAVSTASRFAGFPDVPSISEAVPGLATPSMNIVMAPAGTPAEVLDLLNRHINEITADPAIASRFIPMGGESAQGSRQDTAAMLREQRVEFRKLMQTANIKP.

Positions 1–39 (MNKNIPAFHRRCHGLVQGLARTLLLAPVLLALSVPAAQA) are cleaved as a signal peptide.

It belongs to the UPF0065 (bug) family.

The protein resides in the periplasm. The polypeptide is UPF0065 protein BB4329 (Bordetella bronchiseptica (strain ATCC BAA-588 / NCTC 13252 / RB50) (Alcaligenes bronchisepticus)).